We begin with the raw amino-acid sequence, 128 residues long: Ribonuclease P protein component (128 aa).

Belongs to the RnpA family. In terms of assembly, consists of a catalytic RNA component (M1 or rnpB) and a protein subunit.

It catalyses the reaction Endonucleolytic cleavage of RNA, removing 5'-extranucleotides from tRNA precursor.. In terms of biological role, RNaseP catalyzes the removal of the 5'-leader sequence from pre-tRNA to produce the mature 5'-terminus. It can also cleave other RNA substrates such as 4.5S RNA. The protein component plays an auxiliary but essential role in vivo by binding to the 5'-leader sequence and broadening the substrate specificity of the ribozyme. The sequence is that of Ribonuclease P protein component from Parasynechococcus marenigrum (strain WH8102).